The chain runs to 278 residues: Transmembrane protein 41B (278 aa).

The tract at residues 1-31 is disordered; sequence MQVHERSHTGGHTCQCNHGSEKKAPATGKVH. 6 consecutive transmembrane segments (helical) span residues 39–59, 96–116, 132–154, 184–204, 212–232, and 249–269; these read MSLL…FLVY, FYVE…TFAI, FPLA…YLLS, LINY…FINI, PLKV…FVAI, and SWNS…PAIF. The segment at 127-238 is VTT domain; required for its function in autophagy; the sequence is GFLYPFPLAL…FVAIKAGTTL (112 aa).

It belongs to the TMEM41 family.

It localises to the endoplasmic reticulum membrane. The protein localises to the endomembrane system. The enzyme catalyses a 1,2-diacyl-sn-glycero-3-phospho-L-serine(in) = a 1,2-diacyl-sn-glycero-3-phospho-L-serine(out). It carries out the reaction cholesterol(in) = cholesterol(out). The catalysed reaction is a 1,2-diacyl-sn-glycero-3-phosphocholine(in) = a 1,2-diacyl-sn-glycero-3-phosphocholine(out). It catalyses the reaction a 1,2-diacyl-sn-glycero-3-phosphoethanolamine(in) = a 1,2-diacyl-sn-glycero-3-phosphoethanolamine(out). Functionally, phospholipid scramblase involved in lipid homeostasis and membrane dynamics processes. Has phospholipid scramblase activity toward cholesterol and phosphatidylserine, as well as phosphatidylethanolamine and phosphatidylcholine. Required for autophagosome formation: participates in early stages of autophagosome biogenesis at the endoplasmic reticulum (ER) membrane by reequilibrating the leaflets of the ER as lipids are extracted by atg2 (atg2a or atg2b) to mediate autophagosome assembly. In addition to autophagy, involved in other processes in which phospholipid scramblase activity is required. Required for normal motor neuron development. The protein is Transmembrane protein 41B of Xenopus tropicalis (Western clawed frog).